The following is a 359-amino-acid chain: 1-deoxy-D-xylulose 5-phosphate reductoisomerase (359 aa).

Threonine 12, glycine 13, serine 14, isoleucine 15, lysine 38, and asparagine 39 together coordinate NADPH. Lysine 105 is a binding site for 1-deoxy-D-xylulose 5-phosphate. Residue glutamate 106 coordinates NADPH. Aspartate 130 contributes to the Mn(2+) binding site. 1-deoxy-D-xylulose 5-phosphate is bound by residues serine 131, glutamate 132, serine 152, and histidine 175. Glutamate 132 serves as a coordination point for Mn(2+). An NADPH-binding site is contributed by glycine 181. 1-deoxy-D-xylulose 5-phosphate is bound by residues serine 188, asparagine 193, lysine 194, and glutamate 197. Glutamate 197 is a binding site for Mn(2+).

This sequence belongs to the DXR family. Requires Mg(2+) as cofactor. The cofactor is Mn(2+).

The enzyme catalyses 2-C-methyl-D-erythritol 4-phosphate + NADP(+) = 1-deoxy-D-xylulose 5-phosphate + NADPH + H(+). It participates in isoprenoid biosynthesis; isopentenyl diphosphate biosynthesis via DXP pathway; isopentenyl diphosphate from 1-deoxy-D-xylulose 5-phosphate: step 1/6. Catalyzes the NADPH-dependent rearrangement and reduction of 1-deoxy-D-xylulose-5-phosphate (DXP) to 2-C-methyl-D-erythritol 4-phosphate (MEP). This is 1-deoxy-D-xylulose 5-phosphate reductoisomerase from Pseudothermotoga lettingae (strain ATCC BAA-301 / DSM 14385 / NBRC 107922 / TMO) (Thermotoga lettingae).